The sequence spans 195 residues: Peptide methionine sulfoxide reductase MsrA 2 (195 aa).

Residue Cys18 is part of the active site.

This sequence belongs to the MsrA Met sulfoxide reductase family.

It catalyses the reaction L-methionyl-[protein] + [thioredoxin]-disulfide + H2O = L-methionyl-(S)-S-oxide-[protein] + [thioredoxin]-dithiol. The enzyme catalyses [thioredoxin]-disulfide + L-methionine + H2O = L-methionine (S)-S-oxide + [thioredoxin]-dithiol. Its function is as follows. Has an important function as a repair enzyme for proteins that have been inactivated by oxidation. Catalyzes the reversible oxidation-reduction of methionine sulfoxide in proteins to methionine. This is Peptide methionine sulfoxide reductase MsrA 2 (msrA2) from Mesorhizobium japonicum (strain LMG 29417 / CECT 9101 / MAFF 303099) (Mesorhizobium loti (strain MAFF 303099)).